The primary structure comprises 57 residues: Phylloseptin-Az4 (57 aa).

The first 13 residues, 1–13 (LVLFLGLVSLSIC), serve as a signal peptide directing secretion. The propeptide occupies 14–35 (EEEKRETEEEENDQEEDDKSEE). A disordered region spans residues 16–35 (EKRETEEEENDQEEDDKSEE). The span at 21–32 (EEEENDQEEDDK) shows a compositional bias: acidic residues. Residue Leu56 is modified to Leucine amide.

In terms of tissue distribution, expressed by the skin glands.

The protein resides in the secreted. Has antibacterial activity against the Gram-positive bacterium M.luteus ATCC 49732 (MIC=1.3 uM). Does not inhibit the growth of the fungus C.albicans. In Pithecopus azureus (Orange-legged monkey tree frog), this protein is Phylloseptin-Az4 (psn12).